The chain runs to 132 residues: MVNDTIADMLTGIRNANLAKHKVARVKATKITRCLANVLKEEGLIQNFEEIENNLQNELLISLKYKGKKRQPIITALKRISKPGLRGYANHKELPRVLGGLGIAILSTSSGIMTDQTARHKGCGGEVLCYIW.

The protein belongs to the universal ribosomal protein uS8 family. In terms of assembly, part of the 30S ribosomal subunit.

The protein resides in the plastid. It localises to the cyanelle. Its function is as follows. One of the primary rRNA binding proteins, it binds directly to 16S rRNA central domain where it helps coordinate assembly of the platform of the 30S subunit. This is Small ribosomal subunit protein uS8c (rps8) from Cyanophora paradoxa.